The primary structure comprises 207 residues: Putative 3-methyladenine DNA glycosylase (207 aa).

This sequence belongs to the DNA glycosylase MPG family.

This is Putative 3-methyladenine DNA glycosylase from Burkholderia orbicola (strain MC0-3).